A 387-amino-acid polypeptide reads, in one-letter code: Large ribosomal subunit protein uL3 (387 aa).

Belongs to the universal ribosomal protein uL3 family.

The protein localises to the cytoplasm. This chain is Large ribosomal subunit protein uL3 (RPL3), found in Eremothecium gossypii (strain ATCC 10895 / CBS 109.51 / FGSC 9923 / NRRL Y-1056) (Yeast).